We begin with the raw amino-acid sequence, 552 residues long: CTP synthase (552 aa).

An amidoligase domain region spans residues 1–270; that stretch reads MTKFVFVTGG…DGLICDKLRL (270 aa). A CTP-binding site is contributed by Ser-13. UTP is bound at residue Ser-13. Residues 14–19 and Asp-71 contribute to the ATP site; that span reads SLGKGI. Residues Asp-71 and Glu-144 each coordinate Mg(2+). CTP contacts are provided by residues 151 to 153, 191 to 196, and Lys-227; these read DIE and KTKPTQ. UTP-binding positions include 191–196 and Lys-227; that span reads KTKPTQ. The 254-residue stretch at 295–548 folds into the Glutamine amidotransferase type-1 domain; it reads KIAMVGKYVE…VKAAIERQKA (254 aa). Gly-357 is an L-glutamine binding site. Cys-384 serves as the catalytic Nucleophile; for glutamine hydrolysis. L-glutamine-binding positions include 385–388, Glu-408, and Arg-474; that span reads LGMQ. Residues His-521 and Glu-523 contribute to the active site.

This sequence belongs to the CTP synthase family. As to quaternary structure, homotetramer.

The enzyme catalyses UTP + L-glutamine + ATP + H2O = CTP + L-glutamate + ADP + phosphate + 2 H(+). It catalyses the reaction L-glutamine + H2O = L-glutamate + NH4(+). It carries out the reaction UTP + NH4(+) + ATP = CTP + ADP + phosphate + 2 H(+). It functions in the pathway pyrimidine metabolism; CTP biosynthesis via de novo pathway; CTP from UDP: step 2/2. Its activity is regulated as follows. Allosterically activated by GTP, when glutamine is the substrate; GTP has no effect on the reaction when ammonia is the substrate. The allosteric effector GTP functions by stabilizing the protein conformation that binds the tetrahedral intermediate(s) formed during glutamine hydrolysis. Inhibited by the product CTP, via allosteric rather than competitive inhibition. In terms of biological role, catalyzes the ATP-dependent amination of UTP to CTP with either L-glutamine or ammonia as the source of nitrogen. Regulates intracellular CTP levels through interactions with the four ribonucleotide triphosphates. The polypeptide is CTP synthase (Delftia acidovorans (strain DSM 14801 / SPH-1)).